We begin with the raw amino-acid sequence, 486 residues long: Protein nucleotidyltransferase YdiU (486 aa).

ATP contacts are provided by G90, G92, R93, K113, D125, G126, R176, and R183. D252 serves as the catalytic Proton acceptor. N253 and D262 together coordinate Mg(2+). D262 contacts ATP.

This sequence belongs to the SELO family. It depends on Mg(2+) as a cofactor. Mn(2+) is required as a cofactor.

The enzyme catalyses L-seryl-[protein] + ATP = 3-O-(5'-adenylyl)-L-seryl-[protein] + diphosphate. It catalyses the reaction L-threonyl-[protein] + ATP = 3-O-(5'-adenylyl)-L-threonyl-[protein] + diphosphate. It carries out the reaction L-tyrosyl-[protein] + ATP = O-(5'-adenylyl)-L-tyrosyl-[protein] + diphosphate. The catalysed reaction is L-histidyl-[protein] + UTP = N(tele)-(5'-uridylyl)-L-histidyl-[protein] + diphosphate. The enzyme catalyses L-seryl-[protein] + UTP = O-(5'-uridylyl)-L-seryl-[protein] + diphosphate. It catalyses the reaction L-tyrosyl-[protein] + UTP = O-(5'-uridylyl)-L-tyrosyl-[protein] + diphosphate. Its function is as follows. Nucleotidyltransferase involved in the post-translational modification of proteins. It can catalyze the addition of adenosine monophosphate (AMP) or uridine monophosphate (UMP) to a protein, resulting in modifications known as AMPylation and UMPylation. The sequence is that of Protein nucleotidyltransferase YdiU from Pseudomonas aeruginosa (strain ATCC 15692 / DSM 22644 / CIP 104116 / JCM 14847 / LMG 12228 / 1C / PRS 101 / PAO1).